The chain runs to 435 residues: Oocyte zinc finger protein XlCOF22 (435 aa).

The segment at 71–92 is disordered; sequence NANTSAHFSRNRDSDKHERTHT. Residues 80 to 91 show a composition bias toward basic and acidic residues; the sequence is RNRDSDKHERTH. 12 C2H2-type zinc fingers span residues 97 to 120, 126 to 148, 154 to 176, 182 to 204, 210 to 232, 238 to 260, 266 to 288, 294 to 316, 322 to 345, 351 to 373, 379 to 402, and 408 to 430; these read HSCS…RQSH, FSCS…QRTH, FCCF…RRTH, FSCL…QRTH, FSCF…QRTH, YSCS…RRTH, FSCS…RQTH, and VSCS…FKIH.

The protein belongs to the krueppel C2H2-type zinc-finger protein family.

Its subcellular location is the nucleus. Its function is as follows. May be involved in transcriptional regulation. This Xenopus laevis (African clawed frog) protein is Oocyte zinc finger protein XlCOF22.